An 89-amino-acid polypeptide reads, in one-letter code: SAP domain-containing new25 (89 aa).

Residues 44–78 form the SAP domain; sequence PSQWSKKQLIEYCKKNSLKTSGSHEELVIRVQNHL.

The polypeptide is SAP domain-containing new25 (new25) (Schizosaccharomyces pombe (strain 972 / ATCC 24843) (Fission yeast)).